The chain runs to 429 residues: MSVNVNRSVSDQFYRYKMPRLIAKVEGKGNGIKTVIVNMVDVAKALNRPPTYPTKYFGCELGAQTQFDVKNDRYIVNGSHEANKLQDMLDGFIKKFVLCPECENPETDLHVNPKKQTIGNSCKACGYRGMLDTHHKLCTFILKNPPENSDIGTGKKEKEKKNRKGKDKENGSVSTSETPPPPPPNEISPPHAVEEEEDDDWGEDTTEEAQRRRMDEISDHAKGLTLSDDLERTVEERVNILFDFVKKKKEEGIIDSSDKEIVAEAERLDVKAMGPLVLTEVLFDEKIREQIKKYRRHFLRFCHNNKKAQRYLLHGLECVVAMHQAQLISKIPHILKEMYDADLLEEEVIISWSEKASKKYVSKELAKEIRVKAEPFIKWLKEAEEESSGGEEEDEDENIEVVYSKTASVPKVETVKSDNKDDDIDIDAI.

Phosphoserine is present on Ser-10. 27-34 (GKGNGIKT) is a binding site for GTP. A disordered region spans residues 143-216 (KNPPENSDIG…EEAQRRRMDE (74 aa)). Positions 153 to 170 (TGKKEKEKKNRKGKDKEN) are enriched in basic and acidic residues. The segment covering 178–187 (TPPPPPPNEI) has biased composition (pro residues). Acidic residues predominate over residues 194–207 (EEEEDDDWGEDTTE). Thr-225 is subject to Phosphothreonine. Phosphoserine is present on residues Ser-227, Ser-387, Ser-388, and Ser-408. One can recognise a W2 domain in the interval 231 to 390 (ERTVEERVNI…KEAEEESSGG (160 aa)). Glycyl lysine isopeptide (Lys-Gly) (interchain with G-Cter in SUMO2) cross-links involve residues Lys-411 and Lys-416. Phosphoserine is present on Ser-417.

Belongs to the eIF-2-beta/eIF-5 family. Component of the 43S pre-initiation complex (43S PIC), which is composed of the 40S ribosomal subunit, EIF1, eIF1A (EIF1AX), eIF3 complex, EIF5 and eIF2-GTP-initiator tRNA complex (eIF2 ternary complex). Interacts with eIF1A (EIF1AX) during scanning. Interacts through its C-terminal domain (CTD) with EIF1 or with eIF2-beta (EIF2S2) (mutually exclusive) through a common binding site. Interacts through its C-terminal domain (CTD) with the CTD of EIF5B. Interacts with FMR1 isoform 6; this interaction occurs in a RNA-dependent manner.

It localises to the cytoplasm. Component of the 43S pre-initiation complex (43S PIC), which binds to the mRNA cap-proximal region, scans mRNA 5'-untranslated region, and locates the initiation codon. In this complex, acts as a GTPase-activating protein, by promoting GTP hydrolysis by eIF2G (EIF2S3). During scanning, interacts with both EIF1 (via its C-terminal domain (CTD)) and EIF1A (via its NTD). This interaction with EIF1A contributes to the maintenance of EIF1 within the open 43S PIC. When start codon is recognized, EIF5, via its NTD, induces eIF2G (EIF2S3) to hydrolyze the GTP. Start codon recognition also induces a conformational change of the PIC to a closed state. This change increases the affinity of EIF5-CTD for EIF2-beta (EIF2S2), which allows the release, by an indirect mechanism, of EIF1 from the PIC. Finally, EIF5 stabilizes the PIC in its closed conformation. This chain is Eukaryotic translation initiation factor 5 (Eif5), found in Mus musculus (Mouse).